The chain runs to 699 residues: MSKINKLEHIRNIGICAHIDAGKTTTTERILYYTGKSHKIGEVHEGGATMDWMEQEQERGITITSAATTCRWQDKIINIIDTPGHVDFTIEVERSLRVLDGAVAVFDGVAGVEPQSETVWRQADKYNVPRMCFVNKMDRMGADFYRCVEMIKDRLGAKPLVIQLPVGIEESFKGIIDLVKMKAVIWKDESLGAEYFEEDIPADMKDKAEEYRAKLLDMVVELDDAIMEKYLSGEEVTEEEIKRLIRRGTISAAFYPVLCGSAFKNKGVQPLLDAVVDFLPSPIDIGIVKGMEVSTGEEKDFPISITEPFSALAFKIMNDPFVGSLTFIRIYSGKITSGSTVINTVKNKREKIGRMLLMHANNREDVKEASAGDIVALAGLKDTTTGDTLSDMDKQVILERMEFPEPVIELAVEPKSTADQEKMGLALSRLAAEDPSFRVSTDHETGQTVIKGMGELHLEIIIDRMRREFKVEANIGAPQVAYRETITKACEIDYTHKKQSGGAGQFARVKIIFEPLKEVKDLKDEDKNKTFVFESKIVGGAVPKEYIPGVEKGLNNIRETGVIAGYPMIDFKATLVDGAFHDVDSSVLAFEIAAKAAFREGMPKGNPKLLEPIMKVEVITPDEYMGDIIGDLNSRRGQIQSMDPRGNAQVVTANVPLAEMFGYVNTLRSLSQGRAQFSMIFSHYDQVPSQVADIIKAKK.

Positions 8–283 (EHIRNIGICA…AVVDFLPSPI (276 aa)) constitute a tr-type G domain. Residues 17 to 24 (AHIDAGKT), 81 to 85 (DTPGH), and 135 to 138 (NKMD) contribute to the GTP site.

This sequence belongs to the TRAFAC class translation factor GTPase superfamily. Classic translation factor GTPase family. EF-G/EF-2 subfamily.

The protein localises to the cytoplasm. Functionally, catalyzes the GTP-dependent ribosomal translocation step during translation elongation. During this step, the ribosome changes from the pre-translocational (PRE) to the post-translocational (POST) state as the newly formed A-site-bound peptidyl-tRNA and P-site-bound deacylated tRNA move to the P and E sites, respectively. Catalyzes the coordinated movement of the two tRNA molecules, the mRNA and conformational changes in the ribosome. The polypeptide is Elongation factor G (Rickettsia felis (strain ATCC VR-1525 / URRWXCal2) (Rickettsia azadi)).